The primary structure comprises 270 residues: ATP synthase subunit a (270 aa).

7 helical membrane-spanning segments follow: residues 29–49 (VDTF…FAMV), 87–107 (IAPL…MDLF), 108–128 (PVDL…GLEP), 140–160 (DVNA…GFSI), 182–202 (PVGA…ELAA), 220–240 (LIFI…GAPW), and 241–261 (AIFH…LTIV).

The protein belongs to the ATPase A chain family. In terms of assembly, F-type ATPases have 2 components, CF(1) - the catalytic core - and CF(0) - the membrane proton channel. CF(1) has five subunits: alpha(3), beta(3), gamma(1), delta(1), epsilon(1). CF(0) has three main subunits: a(1), b(2) and c(9-12). The alpha and beta chains form an alternating ring which encloses part of the gamma chain. CF(1) is attached to CF(0) by a central stalk formed by the gamma and epsilon chains, while a peripheral stalk is formed by the delta and b chains.

The protein localises to the cell inner membrane. Key component of the proton channel; it plays a direct role in the translocation of protons across the membrane. The protein is ATP synthase subunit a of Chromobacterium violaceum (strain ATCC 12472 / DSM 30191 / JCM 1249 / CCUG 213 / NBRC 12614 / NCIMB 9131 / NCTC 9757 / MK).